A 647-amino-acid polypeptide reads, in one-letter code: 2',3'-cyclic-nucleotide 2'-phosphodiesterase/3'-nucleotidase (647 aa).

Residues 1–19 (MIKFSATLLATLIAASVNA) form the signal peptide. A divalent metal cation is bound by residues aspartate 31, histidine 33, aspartate 76, asparagine 116, histidine 225, histidine 257, and histidine 259. Residues tyrosine 440 and 544–550 (YRAYGGK) contribute to the substrate site.

This sequence belongs to the 5'-nucleotidase family. It depends on a divalent metal cation as a cofactor.

The protein resides in the periplasm. It carries out the reaction a nucleoside 2',3'-cyclic phosphate + H2O = a nucleoside 3'-phosphate + H(+). The catalysed reaction is a ribonucleoside 3'-phosphate + H2O = a ribonucleoside + phosphate. In terms of biological role, this bifunctional enzyme catalyzes two consecutive reactions during ribonucleic acid degradation. Converts a 2',3'-cyclic nucleotide to a 3'-nucleotide and then the 3'-nucleotide to the corresponding nucleoside and phosphate. This is 2',3'-cyclic-nucleotide 2'-phosphodiesterase/3'-nucleotidase (cpdB) from Salmonella typhimurium (strain LT2 / SGSC1412 / ATCC 700720).